The chain runs to 348 residues: MESIRIIPEVPSFLNQVLSVDAWNILFLVGQALVIFLVVVIVAALMIIYERRMLALWQDRYGPNRVGPWGSLQLVADMLKIFFKEDWTPKFADKFMFILAPAVAMFTALASFAIIPVSPMLGVADWNIGILFFFAMAGMAVYAVMFGGWASQNKYSLLGGLRSAAQTISYEVFLGLSLMGVVAMTGSFNLRDIVVAQQGGFWHWNIFPQFLGFLTFVVAGVAVTHRHPFDQPEAEQELAEGYHVEYSGMKFGMFFIGEYVNVVLISALMTCLFFGGWDAPLNLGFTILPPAFWFMIKTLFFMTMFVLARGSLMRPRYDQVMNFGWKVCLPVTLINLMITAALILISAA.

Helical transmembrane passes span 25–45, 95–115, 128–148, 168–188, 204–224, 254–274, 287–307, and 327–347; these read ILFL…VAAL, FMFI…FAII, IGIL…MFGG, ISYE…TGSF, WNIF…VAVT, FFIG…CLFF, ILPP…MFVL, and VCLP…LISA.

Belongs to the complex I subunit 1 family. NDH-1 is composed of 14 different subunits. Subunits NuoA, H, J, K, L, M, N constitute the membrane sector of the complex.

The protein localises to the cell inner membrane. It carries out the reaction a quinone + NADH + 5 H(+)(in) = a quinol + NAD(+) + 4 H(+)(out). Its function is as follows. NDH-1 shuttles electrons from NADH, via FMN and iron-sulfur (Fe-S) centers, to quinones in the respiratory chain. The immediate electron acceptor for the enzyme in this species is believed to be ubiquinone. Couples the redox reaction to proton translocation (for every two electrons transferred, four hydrogen ions are translocated across the cytoplasmic membrane), and thus conserves the redox energy in a proton gradient. This subunit may bind ubiquinone. The protein is NADH-quinone oxidoreductase subunit H of Psychrobacter sp. (strain PRwf-1).